A 380-amino-acid chain; its full sequence is Flap endonuclease 1 (380 aa).

An N-domain region spans residues 1 to 104 (MGIQGLAKLI…GELAKRSERR (104 aa)). Arginine 19 is modified (symmetric dimethylarginine; by PRMT5). Residue aspartate 34 participates in Mg(2+) binding. DNA contacts are provided by arginine 47 and arginine 70. Position 80 is an N6-acetyllysine (lysine 80). Residue aspartate 86 participates in Mg(2+) binding. Arginine 100 and arginine 104 each carry symmetric dimethylarginine; by PRMT5. The interval 122-253 (EVEKFTKRLV…KRAVDLIQKH (132 aa)) is I-domain. 4 residues coordinate Mg(2+): glutamate 158, glutamate 160, aspartate 179, and aspartate 181. Glutamate 158 is a binding site for DNA. At serine 187 the chain carries Phosphoserine; by CDK2. Arginine 192 is subject to Symmetric dimethylarginine; by PRMT5. A Phosphoserine modification is found at serine 197. DNA contacts are provided by glycine 231 and aspartate 233. Aspartate 233 contributes to the Mg(2+) binding site. Phosphoserine is present on residues serine 255, serine 293, and serine 335. The disordered stretch occupies residues 327–380 (RLSKSRQGSTQGRLDDFFKVTGSLSSAKRKEPEPKGSTKKKAKTGAAGKFKRGK). Threonine 336 is subject to Phosphothreonine. Positions 336–344 (TQGRLDDFF) are interaction with PCNA. Lysine 354 is subject to N6-acetyllysine. A compositionally biased stretch (basic residues) spans 363 to 380 (STKKKAKTGAAGKFKRGK). Threonine 364 bears the Phosphothreonine mark. N6-acetyllysine is present on residues lysine 375, lysine 377, and lysine 380.

It belongs to the XPG/RAD2 endonuclease family. FEN1 subfamily. In terms of assembly, interacts with PCNA. Three molecules of FEN1 bind to one PCNA trimer with each molecule binding to one PCNA monomer. PCNA stimulates the nuclease activity without altering cleavage specificity. The C-terminal domain binds EP300; can bind simultaneously to both PCNA and EP300. Interacts with DDX11; this interaction is direct and increases flap endonuclease activity of FEN1. Interacts with WDR4; regulating its endonuclease activity. Interacts with POLB. It depends on Mg(2+) as a cofactor. Post-translationally, acetylated by EP300. Acetylation inhibits both endonuclease and exonuclease activity. Acetylation also reduces DNA-binding activity but does not affect interaction with PCNA or EP300. Phosphorylation upon DNA damage induces relocalization to the nuclear plasma. Phosphorylation at Ser-187 by CDK2 occurs during late S-phase and results in dissociation from PCNA. In terms of processing, methylation at Arg-192 by PRMT5 impedes Ser-187 phosphorylation and increases interaction with PCNA.

The protein localises to the nucleus. The protein resides in the nucleolus. It localises to the nucleoplasm. It is found in the mitochondrion. Its function is as follows. Structure-specific nuclease with 5'-flap endonuclease and 5'-3' exonuclease activities involved in DNA replication and repair. During DNA replication, cleaves the 5'-overhanging flap structure that is generated by displacement synthesis when DNA polymerase encounters the 5'-end of a downstream Okazaki fragment. It enters the flap from the 5'-end and then tracks to cleave the flap base, leaving a nick for ligation. Also involved in the long patch base excision repair (LP-BER) pathway, by cleaving within the apurinic/apyrimidinic (AP) site-terminated flap. Acts as a genome stabilization factor that prevents flaps from equilibrating into structures that lead to duplications and deletions. Also possesses 5'-3' exonuclease activity on nicked or gapped double-stranded DNA, and exhibits RNase H activity. Also involved in replication and repair of rDNA and in repairing mitochondrial DNA. This Macaca fascicularis (Crab-eating macaque) protein is Flap endonuclease 1.